Here is a 312-residue protein sequence, read N- to C-terminus: Beta-ketoacyl-[acyl-carrier-protein] synthase III (312 aa).

Residues C112 and H237 contribute to the active site. Positions 238–242 (QANIR) are ACP-binding. N267 is a catalytic residue.

It belongs to the thiolase-like superfamily. FabH family. Homodimer.

The protein localises to the cytoplasm. The enzyme catalyses malonyl-[ACP] + acetyl-CoA + H(+) = 3-oxobutanoyl-[ACP] + CO2 + CoA. It functions in the pathway lipid metabolism; fatty acid biosynthesis. Functionally, catalyzes the condensation reaction of fatty acid synthesis by the addition to an acyl acceptor of two carbons from malonyl-ACP. Catalyzes the first condensation reaction which initiates fatty acid synthesis and may therefore play a role in governing the total rate of fatty acid production. Possesses both acetoacetyl-ACP synthase and acetyl transacylase activities. Its substrate specificity determines the biosynthesis of branched-chain and/or straight-chain of fatty acids. In Listeria welshimeri serovar 6b (strain ATCC 35897 / DSM 20650 / CCUG 15529 / CIP 8149 / NCTC 11857 / SLCC 5334 / V8), this protein is Beta-ketoacyl-[acyl-carrier-protein] synthase III.